The sequence spans 565 residues: uncharacterized protein (565 aa).

5 consecutive transmembrane segments (helical) span residues 4–26, 33–55, 68–90, 97–119, and 162–184; these read FVQF…AVWV, GYGL…VGAA, SLLY…VNAL, YAIL…TQFF, and ISAM…IILL. 2 consecutive RCK C-terminal domains span residues 210–295 and 296–379; these read PNVD…LGPE and VPDA…IFGV. 5 consecutive transmembrane segments (helical) span residues 389 to 411, 415 to 432, 453 to 472, 482 to 504, and 539 to 561; these read LLTL…PAFG, GLGN…VSSI, LGLI…DLLT, IFIV…GFHI, and WLGF…YFAM.

This sequence belongs to the AAE transporter (TC 2.A.81) family.

The protein resides in the cell membrane. This is an uncharacterized protein from Bordetella parapertussis (strain 12822 / ATCC BAA-587 / NCTC 13253).